The sequence spans 229 residues: Large ribosomal subunit protein uL1 (229 aa).

This sequence belongs to the universal ribosomal protein uL1 family. Part of the 50S ribosomal subunit.

Its function is as follows. Binds directly to 23S rRNA. The L1 stalk is quite mobile in the ribosome, and is involved in E site tRNA release. Functionally, protein L1 is also a translational repressor protein, it controls the translation of the L11 operon by binding to its mRNA. This Actinobacillus succinogenes (strain ATCC 55618 / DSM 22257 / CCUG 43843 / 130Z) protein is Large ribosomal subunit protein uL1.